A 463-amino-acid polypeptide reads, in one-letter code: Fumarate hydratase class II (463 aa).

Substrate contacts are provided by residues 97–99, R125, 128–131, 138–140, and T186; these read SGT, HPND, and SSN. Residues 121–134 are compositionally biased toward basic and acidic residues; sequence RGEGRKVHPNDHVN. The segment at 121–142 is disordered; sequence RGEGRKVHPNDHVNRGQSSNDT. H187 (proton donor/acceptor) is an active-site residue. S317 is a catalytic residue. Residues S318 and 323–325 each bind substrate; that span reads KVN.

The protein belongs to the class-II fumarase/aspartase family. Fumarase subfamily. Homotetramer.

The protein localises to the cytoplasm. The catalysed reaction is (S)-malate = fumarate + H2O. Its pathway is carbohydrate metabolism; tricarboxylic acid cycle; (S)-malate from fumarate: step 1/1. In terms of biological role, involved in the TCA cycle. Catalyzes the stereospecific interconversion of fumarate to L-malate. The polypeptide is Fumarate hydratase class II (Bordetella bronchiseptica (strain ATCC BAA-588 / NCTC 13252 / RB50) (Alcaligenes bronchisepticus)).